Consider the following 253-residue polypeptide: uncharacterized protein (253 aa).

The protein belongs to the NAD(P)-dependent epimerase/dehydratase family.

This is an uncharacterized protein from Bacillus subtilis (strain 168).